Here is a 198-residue protein sequence, read N- to C-terminus: Transcription factor FapR (198 aa).

Residues 102-168 (TRIARGHHLF…GRTVVDVNSY (67 aa)) form the MaoC-like domain.

This sequence belongs to the FapR family.

Transcriptional factor involved in regulation of membrane lipid biosynthesis by repressing genes involved in fatty acid and phospholipid metabolism. The sequence is that of Transcription factor FapR from Geobacillus thermodenitrificans (strain NG80-2).